The following is a 200-amino-acid chain: MAKVLVLYYSSYGHVETMAQHIAEGAKSVAGVEVTLKRVPETIPVDQARAIGVKVDQAAPVATVDELADYDAIIFGTPTRFGNMAGQMRTFLDQTGGLWMKGALVGKIGSVFASTGTQHGGQETTITSFHTTLLHHGMVIVGVPYACSGLVNMNEITGGTPYGATTLAGADGSRQPSANELDIARYQGKRVAELASKLAS.

A Flavodoxin-like domain is found at 4 to 191 (VLVLYYSSYG…DIARYQGKRV (188 aa)). Residues 10–15 (SSYGHV) and 79–81 (TRF) each bind FMN. Tyrosine 12 provides a ligand contact to NAD(+). Tryptophan 99 serves as a coordination point for substrate. Residues 114–120 (STGTQHG) and histidine 135 each bind FMN.

The protein belongs to the WrbA family. It depends on FMN as a cofactor.

It carries out the reaction a quinone + NADH + H(+) = a quinol + NAD(+). The enzyme catalyses a quinone + NADPH + H(+) = a quinol + NADP(+). In Burkholderia lata (strain ATCC 17760 / DSM 23089 / LMG 22485 / NCIMB 9086 / R18194 / 383), this protein is NAD(P)H dehydrogenase (quinone).